The sequence spans 411 residues: 2,3-bisphosphoglycerate-independent phosphoglycerate mutase (411 aa).

This sequence belongs to the BPG-independent phosphoglycerate mutase family. A-PGAM subfamily.

The enzyme catalyses (2R)-2-phosphoglycerate = (2R)-3-phosphoglycerate. It participates in carbohydrate degradation; glycolysis; pyruvate from D-glyceraldehyde 3-phosphate: step 3/5. Functionally, catalyzes the interconversion of 2-phosphoglycerate and 3-phosphoglycerate. The sequence is that of 2,3-bisphosphoglycerate-independent phosphoglycerate mutase from Pyrobaculum calidifontis (strain DSM 21063 / JCM 11548 / VA1).